Reading from the N-terminus, the 192-residue chain is Protein FAM210B, mitochondrial (192 aa).

The transit peptide at 1–58 (MAGLLALLGPAGRVGARVRPRATWLLGATAPCAPPPLALALLPPRLDARLLRTARGDC) directs the protein to the mitochondrion. Residues 57 to 80 (DCRGHQDPSQATGTTGSSVSCTEE) form a disordered region. Polar residues predominate over residues 63 to 77 (DPSQATGTTGSSVSC). Residues 80-191 (EKKQSKSQQL…VGFFKPPAAK (112 aa)) enclose the DUF1279 domain. 2 consecutive transmembrane segments (helical) span residues 99–119 (VGVS…YMVV) and 150–170 (FVVA…ITLV).

It belongs to the FAM210 family. Expressed in late erythroblast differentiation stages. Underexpressed in ovarian cancer epithelia cells compared with normal human ovarian surface epithelia.

It is found in the mitochondrion. It localises to the mitochondrion outer membrane. Its function is as follows. Plays a role in erythroid differentiation. Involved in cell proliferation and tumor cell growth suppression. Involved in the metabolic reprogramming of cancer cells in a PDK4-dependent manner. This Homo sapiens (Human) protein is Protein FAM210B, mitochondrial.